Reading from the N-terminus, the 123-residue chain is UPF0102 protein CLM_2733 (123 aa).

This sequence belongs to the UPF0102 family.

The sequence is that of UPF0102 protein CLM_2733 from Clostridium botulinum (strain Kyoto / Type A2).